The sequence spans 325 residues: BTB/POZ domain-containing protein KCTD12 (325 aa).

The segment at 1–28 is disordered; it reads MALADSTRGLPNGGGGGGGSGSSSSSAE. Alanine 2 bears the N-acetylalanine mark. A compositionally biased stretch (gly residues) spans 11–21; it reads PNGGGGGGGSG. Tyrosine 119 carries the post-translational modification Phosphotyrosine. Positions 129-202 are disordered; the sequence is LGAPQQPGPG…PLLTPSQSLD (74 aa). Serine 151, serine 171, and serine 185 each carry phosphoserine. Threonine 196 is modified (phosphothreonine). Serine 200 bears the Phosphoserine mark.

Interacts as a tetramer with GABBR1 and GABBR2. As to expression, present in a variety of fetal organs, with highest expression levels in the cochlea and brain and, in stark contrast, is detected only at extremely low levels in adult organs, such as brain and lung.

The protein localises to the presynaptic cell membrane. It is found in the postsynaptic cell membrane. In terms of biological role, auxiliary subunit of GABA-B receptors that determine the pharmacology and kinetics of the receptor response. Increases agonist potency and markedly alter the G-protein signaling of the receptors by accelerating onset and promoting desensitization. In Homo sapiens (Human), this protein is BTB/POZ domain-containing protein KCTD12 (KCTD12).